Here is a 156-residue protein sequence, read N- to C-terminus: Small ribosomal subunit protein uS7 (156 aa).

It belongs to the universal ribosomal protein uS7 family. In terms of assembly, part of the 30S ribosomal subunit. Contacts proteins S9 and S11.

One of the primary rRNA binding proteins, it binds directly to 16S rRNA where it nucleates assembly of the head domain of the 30S subunit. Is located at the subunit interface close to the decoding center, probably blocks exit of the E-site tRNA. This is Small ribosomal subunit protein uS7 from Clostridium perfringens (strain ATCC 13124 / DSM 756 / JCM 1290 / NCIMB 6125 / NCTC 8237 / Type A).